The following is a 435-amino-acid chain: MKTTYVNATIVTMNEQNEVIENGYIIVENDQIIDVKSGKFANDFEVDEVIDMKGKWVLPGLVNTHTHVVMSLLRGIGDDMLLQPWLETRIWPLESQFTPQIAVASTELGLLEMVKSGTTSFSDMFNPIGVDQDAIMETVSRSGMRAAVSRTLFSFGTKDDEKKAIEEAEKYVKRYYNESGMLTTMVAPHSPYTCSTELLEECARIAVENQTMVHIHLSETEREVRDIEAQYGKRPVEYAASCGLFKRPTVIAHGVVLNDDERAFLAENDVRVAHNPNSNLKLGSGIANVKAMLEAGIKVGIATDSVASNNNLDMFEEMRIATLLQKGIHQDATALPVETALTLATKGAAEVIGMKQTGSLEIGKCADFITIDPSNKPHLQPADEVLSHLVYAASGKDISDVIINGKHVVWNGECKTLDEERIIFEASRYKRGLQR.

2 residues coordinate Zn(2+): His65 and His67. The substrate site is built by Glu94, Arg150, and His189. His216 is a Zn(2+) binding site. Substrate-binding residues include Glu219 and Asp304. Zn(2+) is bound at residue Asp304.

Belongs to the metallo-dependent hydrolases superfamily. MTA/SAH deaminase family. Requires Zn(2+) as cofactor.

It catalyses the reaction S-adenosyl-L-homocysteine + H2O + H(+) = S-inosyl-L-homocysteine + NH4(+). It carries out the reaction S-methyl-5'-thioadenosine + H2O + H(+) = S-methyl-5'-thioinosine + NH4(+). Functionally, catalyzes the deamination of 5-methylthioadenosine and S-adenosyl-L-homocysteine into 5-methylthioinosine and S-inosyl-L-homocysteine, respectively. Is also able to deaminate adenosine. This is 5-methylthioadenosine/S-adenosylhomocysteine deaminase from Bacillus cereus (strain B4264).